A 275-amino-acid polypeptide reads, in one-letter code: Elongation factor Ts (275 aa).

Residues 76–79 (TDFV) form an involved in Mg(2+) ion dislocation from EF-Tu region.

It belongs to the EF-Ts family.

The protein resides in the cytoplasm. In terms of biological role, associates with the EF-Tu.GDP complex and induces the exchange of GDP to GTP. It remains bound to the aminoacyl-tRNA.EF-Tu.GTP complex up to the GTP hydrolysis stage on the ribosome. The sequence is that of Elongation factor Ts from Mycobacterium avium (strain 104).